We begin with the raw amino-acid sequence, 36 residues long: Dolichyl-diphosphooligosaccharide--protein glycosyltransferase subunit 2 (36 aa).

The protein belongs to the SWP1 family. In terms of assembly, component of the oligosaccharyltransferase (OST) complex.

The protein resides in the endoplasmic reticulum. Its subcellular location is the endoplasmic reticulum membrane. It participates in protein modification; protein glycosylation. Subunit of the oligosaccharyl transferase (OST) complex that catalyzes the initial transfer of a defined glycan (Glc(3)Man(9)GlcNAc(2) in eukaryotes) from the lipid carrier dolichol-pyrophosphate to an asparagine residue within an Asn-X-Ser/Thr consensus motif in nascent polypeptide chains, the first step in protein N-glycosylation. N-glycosylation occurs cotranslationally and the complex associates with the Sec61 complex at the channel-forming translocon complex that mediates protein translocation across the endoplasmic reticulum (ER). All subunits are required for a maximal enzyme activity. The polypeptide is Dolichyl-diphosphooligosaccharide--protein glycosyltransferase subunit 2 (Gallus gallus (Chicken)).